Here is an 808-residue protein sequence, read N- to C-terminus: Probable E3 ubiquitin-protein ligase hulA (808 aa).

Residues 1-112 enclose the C2 domain; it reads MGSNLPAQPN…QMGGDEMLTR (112 aa). 2 disordered regions span residues 134–231 and 275–346; these read NLST…GWER and RRAH…YFVD. Polar residues-rich tracts occupy residues 142–159 and 171–198; these read QANGLHRSNLQSSTSSGL and GPSQLDPTASNPSLNPQRVPSTTRPSST. The segment covering 199-210 has biased composition (low complexity); that stretch reads VAPVNGAAAPGA. Residues 211–220 are compositionally biased toward polar residues; sequence SRTNLSSFED. Residues 223–256 enclose the WW 1 domain; the sequence is GRLPAGWERREDNLGRTYYVDHNTRTTTWTRPSS. The span at 275-288 shows a compositional bias: basic and acidic residues; that stretch reads RRAHQSRMLPEDRT. Residues 289-303 are compositionally biased toward polar residues; it reads GASSPNLQENQQAQT. Low complexity predominate over residues 317 to 326; that stretch reads ATGATTAGTG. WW domains are found at residues 326–359 and 386–419; these read GELPPGWEQRTTPEGRPYFVDHNTRTTTWVDPRR and GPLPSGWEMRLTNTARVYFVDHNTKTTTWDDPRL. Residues 475–808 enclose the HECT domain; that stretch reads SASDLKKRLM…VEETLGFGQE (334 aa). C776 (glycyl thioester intermediate) is an active-site residue.

It belongs to the RSP5/NEDD4 family. As to quaternary structure, interacts with creD.

The protein resides in the cytoplasm. It catalyses the reaction S-ubiquitinyl-[E2 ubiquitin-conjugating enzyme]-L-cysteine + [acceptor protein]-L-lysine = [E2 ubiquitin-conjugating enzyme]-L-cysteine + N(6)-ubiquitinyl-[acceptor protein]-L-lysine.. It participates in protein modification; protein ubiquitination. Its function is as follows. E3 ubiquitin-protein ligase which accepts ubiquitin from an E2 ubiquitin-conjugating enzyme in the form of a thioester and then directly transfers the ubiquitin to targeted substrates. Probably involved in the regulatory network controlling carbon source utilization. The sequence is that of Probable E3 ubiquitin-protein ligase hulA (hulA) from Aspergillus terreus (strain NIH 2624 / FGSC A1156).